The following is a 99-amino-acid chain: MKTQVTKARLEAKVNIDIYELLKQAAAITGRTLTDFVVSVAYEEAKKTISEHQVLRLAVNDQALLIESLSKPFEPNPSMKNALDVYEAYLSITGKNNDK.

The protein belongs to the TacA antitoxin family.

In terms of biological role, putative antitoxin component of a toxin-antitoxin (TA) system; its cognate toxin (usually a tRNA acetylase) is unknown. In Haemophilus influenzae (strain ATCC 51907 / DSM 11121 / KW20 / Rd), this protein is Orphan antixoxin protein TacA.